The primary structure comprises 94 residues: DNA-binding protein HU (94 aa).

The protein belongs to the bacterial histone-like protein family. As to quaternary structure, homodimer.

In terms of biological role, histone-like DNA-binding protein which is capable of wrapping DNA to stabilize it, and thus to prevent its denaturation under extreme environmental conditions. It is essential for heterocyst differentiation. The sequence is that of DNA-binding protein HU (hup) from Nostoc sp. (strain PCC 7120 / SAG 25.82 / UTEX 2576).